A 255-amino-acid chain; its full sequence is Hydroxyacylglutathione hydrolase (255 aa).

Residues His53, His55, Asp57, His58, His110, Asp127, and His165 each contribute to the Zn(2+) site.

The protein belongs to the metallo-beta-lactamase superfamily. Glyoxalase II family. As to quaternary structure, monomer. The cofactor is Zn(2+).

It carries out the reaction an S-(2-hydroxyacyl)glutathione + H2O = a 2-hydroxy carboxylate + glutathione + H(+). It functions in the pathway secondary metabolite metabolism; methylglyoxal degradation; (R)-lactate from methylglyoxal: step 2/2. Thiolesterase that catalyzes the hydrolysis of S-D-lactoyl-glutathione to form glutathione and D-lactic acid. This is Hydroxyacylglutathione hydrolase from Xanthomonas campestris pv. campestris (strain 8004).